Reading from the N-terminus, the 224-residue chain is Large ribosomal subunit protein uL4 (224 aa).

The tract at residues 53 to 74 (RNRSEVSHSTKKPFKQKGTGNA) is disordered.

The protein belongs to the universal ribosomal protein uL4 family. In terms of assembly, part of the 50S ribosomal subunit.

In terms of biological role, one of the primary rRNA binding proteins, this protein initially binds near the 5'-end of the 23S rRNA. It is important during the early stages of 50S assembly. It makes multiple contacts with different domains of the 23S rRNA in the assembled 50S subunit and ribosome. Forms part of the polypeptide exit tunnel. This is Large ribosomal subunit protein uL4 from Chlamydia pneumoniae (Chlamydophila pneumoniae).